The following is a 178-amino-acid chain: ATP synthase subunit delta (178 aa).

Belongs to the ATPase delta chain family. As to quaternary structure, F-type ATPases have 2 components, F(1) - the catalytic core - and F(0) - the membrane proton channel. F(1) has five subunits: alpha(3), beta(3), gamma(1), delta(1), epsilon(1). F(0) has three main subunits: a(1), b(2) and c(10-14). The alpha and beta chains form an alternating ring which encloses part of the gamma chain. F(1) is attached to F(0) by a central stalk formed by the gamma and epsilon chains, while a peripheral stalk is formed by the delta and b chains.

It is found in the cell inner membrane. F(1)F(0) ATP synthase produces ATP from ADP in the presence of a proton or sodium gradient. F-type ATPases consist of two structural domains, F(1) containing the extramembraneous catalytic core and F(0) containing the membrane proton channel, linked together by a central stalk and a peripheral stalk. During catalysis, ATP synthesis in the catalytic domain of F(1) is coupled via a rotary mechanism of the central stalk subunits to proton translocation. Functionally, this protein is part of the stalk that links CF(0) to CF(1). It either transmits conformational changes from CF(0) to CF(1) or is implicated in proton conduction. This Marinobacter nauticus (strain ATCC 700491 / DSM 11845 / VT8) (Marinobacter aquaeolei) protein is ATP synthase subunit delta.